The following is a 311-amino-acid chain: Bifunctional protein FolD (311 aa).

174–176 (GKG) lines the NADP(+) pocket.

The protein belongs to the tetrahydrofolate dehydrogenase/cyclohydrolase family. In terms of assembly, homodimer.

The catalysed reaction is (6R)-5,10-methylene-5,6,7,8-tetrahydrofolate + NADP(+) = (6R)-5,10-methenyltetrahydrofolate + NADPH. It carries out the reaction (6R)-5,10-methenyltetrahydrofolate + H2O = (6R)-10-formyltetrahydrofolate + H(+). It participates in one-carbon metabolism; tetrahydrofolate interconversion. Catalyzes the oxidation of 5,10-methylenetetrahydrofolate to 5,10-methenyltetrahydrofolate and then the hydrolysis of 5,10-methenyltetrahydrofolate to 10-formyltetrahydrofolate. In Pyrobaculum islandicum (strain DSM 4184 / JCM 9189 / GEO3), this protein is Bifunctional protein FolD.